The chain runs to 247 residues: Nodulation protein H (247 aa).

The tract at residues 1–16 is hydrophobic; the sequence is MTHSTLPPRPFAILAM.

Its function is as follows. Required for the formation of sulfated nod factor. Proposed to transfer activated sulfate (PAPS) to a N-acetylglucosamine of the nod factor. This Rhizobium meliloti (Ensifer meliloti) protein is Nodulation protein H (nodH).